A 125-amino-acid polypeptide reads, in one-letter code: Small ribosomal subunit protein eS8 (125 aa).

It belongs to the eukaryotic ribosomal protein eS8 family. As to quaternary structure, part of the 30S ribosomal subunit.

The sequence is that of Small ribosomal subunit protein eS8 from Methanosphaerula palustris (strain ATCC BAA-1556 / DSM 19958 / E1-9c).